A 181-amino-acid polypeptide reads, in one-letter code: Ion-translocating oxidoreductase complex subunit B (181 aa).

Residues 1-26 (MLEAVSAVMSLGGMALFAGLGLGYAA) are hydrophobic. The 59-residue stretch at 32–90 (EADPVVEKLEALLPATNCGMCGHPGCGPYAQAITEGEAINLCTPGGKAVMESIAAMLGV) folds into the 4Fe-4S domain. 12 residues coordinate [4Fe-4S] cluster: C49, C52, C57, C73, C110, C113, C116, C120, C140, C143, C146, and C150. 4Fe-4S ferredoxin-type domains follow at residues 101 to 130 (KVAYIDEEACIGCTACIKVCPVDAIVGANK) and 131 to 160 (QSHTVIVAECTSCQLCLEPCPTDCITMQPV).

The protein belongs to the 4Fe4S bacterial-type ferredoxin family. RnfB subfamily. In terms of assembly, the complex is composed of six subunits: RnfA, RnfB, RnfC, RnfD, RnfE and RnfG. [4Fe-4S] cluster serves as cofactor.

It localises to the cell inner membrane. In terms of biological role, part of a membrane-bound complex that couples electron transfer with translocation of ions across the membrane. The protein is Ion-translocating oxidoreductase complex subunit B of Magnetococcus marinus (strain ATCC BAA-1437 / JCM 17883 / MC-1).